Consider the following 232-residue polypeptide: 5'-methylthioadenosine/S-adenosylhomocysteine nucleosidase (232 aa).

Glu-12 serves as the catalytic Proton acceptor. Residues Gly-78, Ile-152, and 173–174 (ME) contribute to the substrate site. Catalysis depends on Asp-197, which acts as the Proton donor.

It belongs to the PNP/UDP phosphorylase family. MtnN subfamily. Homodimer.

It carries out the reaction S-adenosyl-L-homocysteine + H2O = S-(5-deoxy-D-ribos-5-yl)-L-homocysteine + adenine. The enzyme catalyses S-methyl-5'-thioadenosine + H2O = 5-(methylsulfanyl)-D-ribose + adenine. The catalysed reaction is 5'-deoxyadenosine + H2O = 5-deoxy-D-ribose + adenine. It functions in the pathway amino-acid biosynthesis; L-methionine biosynthesis via salvage pathway; S-methyl-5-thio-alpha-D-ribose 1-phosphate from S-methyl-5'-thioadenosine (hydrolase route): step 1/2. In terms of biological role, catalyzes the irreversible cleavage of the glycosidic bond in both 5'-methylthioadenosine (MTA) and S-adenosylhomocysteine (SAH/AdoHcy) to adenine and the corresponding thioribose, 5'-methylthioribose and S-ribosylhomocysteine, respectively. Also cleaves 5'-deoxyadenosine, a toxic by-product of radical S-adenosylmethionine (SAM) enzymes, into 5-deoxyribose and adenine. Thus, is required for in vivo function of the radical SAM enzymes biotin synthase and lipoic acid synthase, that are inhibited by 5'-deoxyadenosine accumulation. The sequence is that of 5'-methylthioadenosine/S-adenosylhomocysteine nucleosidase from Edwardsiella ictaluri (strain 93-146).